Here is a 125-residue protein sequence, read N- to C-terminus: Small ribosomal subunit protein uS13 (125 aa).

Residues 94-125 are disordered; the sequence is SLPVRGQRTRTNARTRKGKRKTVAGKKKAVKK.

Belongs to the universal ribosomal protein uS13 family. Part of the 30S ribosomal subunit. Forms a loose heterodimer with protein S19. Forms two bridges to the 50S subunit in the 70S ribosome.

In terms of biological role, located at the top of the head of the 30S subunit, it contacts several helices of the 16S rRNA. In the 70S ribosome it contacts the 23S rRNA (bridge B1a) and protein L5 of the 50S subunit (bridge B1b), connecting the 2 subunits; these bridges are implicated in subunit movement. Contacts the tRNAs in the A and P-sites. The sequence is that of Small ribosomal subunit protein uS13 from Chlorobium chlorochromatii (strain CaD3).